We begin with the raw amino-acid sequence, 453 residues long: Glutamyl-tRNA(Gln) amidotransferase subunit A (453 aa).

Active-site charge relay system residues include K56 and S131. Residue S155 is the Acyl-ester intermediate of the active site.

This sequence belongs to the amidase family. GatA subfamily. Heterotrimer of A, B and C subunits.

It carries out the reaction L-glutamyl-tRNA(Gln) + L-glutamine + ATP + H2O = L-glutaminyl-tRNA(Gln) + L-glutamate + ADP + phosphate + H(+). Functionally, allows the formation of correctly charged Gln-tRNA(Gln) through the transamidation of misacylated Glu-tRNA(Gln) in organisms which lack glutaminyl-tRNA synthetase. The reaction takes place in the presence of glutamine and ATP through an activated gamma-phospho-Glu-tRNA(Gln). The sequence is that of Glutamyl-tRNA(Gln) amidotransferase subunit A from Campylobacter fetus subsp. fetus (strain 82-40).